Here is a 162-residue protein sequence, read N- to C-terminus: Putative colanic acid biosynthesis acetyltransferase WcaB (162 aa).

The protein belongs to the transferase hexapeptide repeat family.

It functions in the pathway slime biogenesis; slime polysaccharide biosynthesis. This chain is Putative colanic acid biosynthesis acetyltransferase WcaB (wcaB), found in Escherichia coli O157:H7.